We begin with the raw amino-acid sequence, 360 residues long: uncharacterized protein (360 aa).

The region spanning 19–179 is the PNPLA domain; the sequence is LALGSGGARG…LDPLPMAPIA (161 aa). The GXSXG motif lies at 50–54; it reads GSSMG. Ser-52 acts as the Nucleophile in catalysis. Asp-166 serves as the catalytic Proton acceptor. Positions 166 to 168 match the DGA/G motif; the sequence is DGG. Residues 251–282 are disordered; the sequence is DSWSQAPEIEQRPAGPPADREEAADTPGLPKM.

This sequence belongs to the NTE family.

This is an uncharacterized protein from Mycobacterium bovis (strain ATCC BAA-935 / AF2122/97).